The following is a 230-amino-acid chain: 7-cyano-7-deazaguanine synthase (230 aa).

14 to 24 is a binding site for ATP; sequence LSGGLDSTTTL. 4 residues coordinate Zn(2+): Cys-194, Cys-204, Cys-207, and Cys-210.

The protein belongs to the QueC family. Zn(2+) serves as cofactor.

It catalyses the reaction 7-carboxy-7-deazaguanine + NH4(+) + ATP = 7-cyano-7-deazaguanine + ADP + phosphate + H2O + H(+). It participates in purine metabolism; 7-cyano-7-deazaguanine biosynthesis. Catalyzes the ATP-dependent conversion of 7-carboxy-7-deazaguanine (CDG) to 7-cyano-7-deazaguanine (preQ(0)). The chain is 7-cyano-7-deazaguanine synthase from Vesicomyosocius okutanii subsp. Calyptogena okutanii (strain HA).